Reading from the N-terminus, the 138-residue chain is Putative nickel-responsive regulator (138 aa).

Ni(2+) contacts are provided by histidine 78, histidine 89, histidine 91, and cysteine 97.

It belongs to the transcriptional regulatory CopG/NikR family. It depends on Ni(2+) as a cofactor.

In terms of biological role, transcriptional regulator. The protein is Putative nickel-responsive regulator of Thermococcus onnurineus (strain NA1).